A 431-amino-acid polypeptide reads, in one-letter code: Enolase (431 aa).

Gln167 contributes to the (2R)-2-phosphoglycerate binding site. Residue Glu209 is the Proton donor of the active site. Mg(2+) is bound by residues Asp246, Glu289, and Asp316. 4 residues coordinate (2R)-2-phosphoglycerate: Lys341, Arg370, Ser371, and Lys392. Catalysis depends on Lys341, which acts as the Proton acceptor.

Belongs to the enolase family. In terms of assembly, component of the RNA degradosome, a multiprotein complex involved in RNA processing and mRNA degradation. The cofactor is Mg(2+).

It is found in the cytoplasm. Its subcellular location is the secreted. The protein localises to the cell surface. It carries out the reaction (2R)-2-phosphoglycerate = phosphoenolpyruvate + H2O. Its pathway is carbohydrate degradation; glycolysis; pyruvate from D-glyceraldehyde 3-phosphate: step 4/5. Functionally, catalyzes the reversible conversion of 2-phosphoglycerate (2-PG) into phosphoenolpyruvate (PEP). It is essential for the degradation of carbohydrates via glycolysis. The chain is Enolase from Shewanella putrefaciens (strain CN-32 / ATCC BAA-453).